Reading from the N-terminus, the 129-residue chain is Lysozyme C-1 (129 aa).

Residues 1 to 129 (KVFERCELAR…VSSYVEGCTL (129 aa)) form the C-type lysozyme domain. Intrachain disulfides connect Cys6-Cys127, Cys30-Cys115, Cys65-Cys81, and Cys77-Cys95. Active-site residues include Glu35 and Asp53.

It belongs to the glycosyl hydrolase 22 family. Monomer.

It carries out the reaction Hydrolysis of (1-&gt;4)-beta-linkages between N-acetylmuramic acid and N-acetyl-D-glucosamine residues in a peptidoglycan and between N-acetyl-D-glucosamine residues in chitodextrins.. Functionally, lysozymes have primarily a bacteriolytic function; those in tissues and body fluids are associated with the monocyte-macrophage system and enhance the activity of immunoagents. This chain is Lysozyme C-1, found in Capra hircus (Goat).